A 261-amino-acid chain; its full sequence is Cytochrome c oxidase subunit 3 (261 aa).

Over 1-15 (MTHQTHAYHMVNPSP) the chain is Mitochondrial matrix. Residues 16 to 34 (WPLTGALSALLMTSGLIMW) form a helical membrane-spanning segment. The Mitochondrial intermembrane segment spans residues 35 to 40 (FHFNST). Residues 41 to 66 (TLLMLGLTTNMLTMYQWWRDVVREST) form a helical membrane-spanning segment. The Mitochondrial matrix segment spans residues 67 to 72 (FQGHHT). The helical transmembrane segment at 73–105 (PNVQKGLRYGMILFIISEVLFFTGFFWAFYHSS) threads the bilayer. Topologically, residues 106–128 (LAPTPELGGCWPPTGIHPLNPLE) are mitochondrial intermembrane. The chain crosses the membrane as a helical span at residues 129-152 (VPLLNTSVLLASGVSITWAHHSLM). Residues 153 to 155 (EGN) lie on the Mitochondrial matrix side of the membrane. A helical transmembrane segment spans residues 156–183 (RNHMLQALFITIALGVYFTLLQASEYYE). Residues 184-190 (APFTISD) lie on the Mitochondrial intermembrane side of the membrane. A helical membrane pass occupies residues 191–223 (GVYGSTFFVATGFHGLHVIIGSTFLIVCFFRQL). Topologically, residues 224–232 (KFHFTSSHH) are mitochondrial matrix. Residues 233 to 256 (FGFEAAAWYWHFVDVVWLFLYVSI) traverse the membrane as a helical segment. Residues 257 to 261 (YWWGS) lie on the Mitochondrial intermembrane side of the membrane.

This sequence belongs to the cytochrome c oxidase subunit 3 family. In terms of assembly, component of the cytochrome c oxidase (complex IV, CIV), a multisubunit enzyme composed of 14 subunits. The complex is composed of a catalytic core of 3 subunits MT-CO1, MT-CO2 and MT-CO3, encoded in the mitochondrial DNA, and 11 supernumerary subunits COX4I, COX5A, COX5B, COX6A, COX6B, COX6C, COX7A, COX7B, COX7C, COX8 and NDUFA4, which are encoded in the nuclear genome. The complex exists as a monomer or a dimer and forms supercomplexes (SCs) in the inner mitochondrial membrane with NADH-ubiquinone oxidoreductase (complex I, CI) and ubiquinol-cytochrome c oxidoreductase (cytochrome b-c1 complex, complex III, CIII), resulting in different assemblies (supercomplex SCI(1)III(2)IV(1) and megacomplex MCI(2)III(2)IV(2)).

It is found in the mitochondrion inner membrane. It catalyses the reaction 4 Fe(II)-[cytochrome c] + O2 + 8 H(+)(in) = 4 Fe(III)-[cytochrome c] + 2 H2O + 4 H(+)(out). Its function is as follows. Component of the cytochrome c oxidase, the last enzyme in the mitochondrial electron transport chain which drives oxidative phosphorylation. The respiratory chain contains 3 multisubunit complexes succinate dehydrogenase (complex II, CII), ubiquinol-cytochrome c oxidoreductase (cytochrome b-c1 complex, complex III, CIII) and cytochrome c oxidase (complex IV, CIV), that cooperate to transfer electrons derived from NADH and succinate to molecular oxygen, creating an electrochemical gradient over the inner membrane that drives transmembrane transport and the ATP synthase. Cytochrome c oxidase is the component of the respiratory chain that catalyzes the reduction of oxygen to water. Electrons originating from reduced cytochrome c in the intermembrane space (IMS) are transferred via the dinuclear copper A center (CU(A)) of subunit 2 and heme A of subunit 1 to the active site in subunit 1, a binuclear center (BNC) formed by heme A3 and copper B (CU(B)). The BNC reduces molecular oxygen to 2 water molecules using 4 electrons from cytochrome c in the IMS and 4 protons from the mitochondrial matrix. The protein is Cytochrome c oxidase subunit 3 (MT-CO3) of Gazella spekei (Speke's gazelle).